The primary structure comprises 401 residues: Pleckstrin homology-like domain family A member 1 (401 aa).

Disordered stretches follow at residues 39–67 (IQKR…ARSS), 190–222 (QQQQ…AVAS), and 293–401 (KSTR…SNSA). The PH domain maps to 151 to 283 (LKEGVLEKRS…AEITLQMVQY (133 aa)). Over residues 190–204 (QQQQQQQQQQQQQQQ) the composition is skewed to low complexity. A compositionally biased stretch (pro residues) spans 308–344 (PSQPQPQPQLQPQPQPQPQPQPQPQSQPQPQPQPKPQ). The 15 X 2 AA repeats of P-Q stretch occupies residues 311–346 (PQPQPQLQPQPQPQPQPQPQPQSQPQPQPQPKPQPQ). Residues 352 to 378 (PHPHPHPHSHPHSHPHPHPHPHPHQIP) show a composition bias toward basic residues. Residues 352-389 (PHPHPHPHSHPHSHPHPHPHPHPHQIPHPHPQPHSQPH) are 14 X 2 AA repeats of P-H.

As to quaternary structure, interacts with RPL14, EIF3S7 and PABPC4. As to expression, widely expressed with highest levels in pancreas. Strongly expressed by benign melanocytic nevi, and progressively reduced expressed in primary and metastatic melanomas (at protein level).

The protein resides in the cytoplasm. It is found in the cytoplasmic vesicle. Its subcellular location is the nucleus. The protein localises to the nucleolus. Its function is as follows. Seems to be involved in regulation of apoptosis. May be involved in detachment-mediated programmed cell death. May mediate apoptosis during neuronal development. May be involved in regulation of anti-apoptotic effects of IGF1. May be involved in translational regulation. The protein is Pleckstrin homology-like domain family A member 1 (PHLDA1) of Homo sapiens (Human).